The following is a 37-amino-acid chain: Large ribosomal subunit protein bL36 (37 aa).

The protein belongs to the bacterial ribosomal protein bL36 family.

In Leptospira biflexa serovar Patoc (strain Patoc 1 / Ames), this protein is Large ribosomal subunit protein bL36.